The chain runs to 304 residues: Non-specific ribonucleoside hydrolase RihC (304 aa).

Histidine 233 is an active-site residue.

This sequence belongs to the IUNH family. RihC subfamily.

Hydrolyzes both purine and pyrimidine ribonucleosides with a broad-substrate specificity. In Shigella flexneri serotype 5b (strain 8401), this protein is Non-specific ribonucleoside hydrolase RihC.